We begin with the raw amino-acid sequence, 487 residues long: Glutamyl-tRNA(Gln) amidotransferase subunit A (487 aa).

Catalysis depends on charge relay system residues lysine 79 and serine 158. Serine 182 serves as the catalytic Acyl-ester intermediate.

The protein belongs to the amidase family. GatA subfamily. As to quaternary structure, heterotrimer of A, B and C subunits.

The catalysed reaction is L-glutamyl-tRNA(Gln) + L-glutamine + ATP + H2O = L-glutaminyl-tRNA(Gln) + L-glutamate + ADP + phosphate + H(+). Its function is as follows. Allows the formation of correctly charged Gln-tRNA(Gln) through the transamidation of misacylated Glu-tRNA(Gln) in organisms which lack glutaminyl-tRNA synthetase. The reaction takes place in the presence of glutamine and ATP through an activated gamma-phospho-Glu-tRNA(Gln). This Ehrlichia canis (strain Jake) protein is Glutamyl-tRNA(Gln) amidotransferase subunit A.